The primary structure comprises 275 residues: Acetyl-coenzyme A carboxylase carboxyl transferase subunit beta (275 aa).

The CoA carboxyltransferase N-terminal domain occupies Gly21–Gly275. 4 residues coordinate Zn(2+): Cys26, Cys28, Cys44, and Cys47. Residues Cys26–Cys47 form a C4-type zinc finger.

The protein belongs to the AccD/PCCB family. Acetyl-CoA carboxylase is a heterohexamer composed of biotin carboxyl carrier protein (AccB), biotin carboxylase (AccC) and two subunits each of ACCase subunit alpha (AccA) and ACCase subunit beta (AccD). Zn(2+) is required as a cofactor.

It is found in the cytoplasm. It catalyses the reaction N(6)-carboxybiotinyl-L-lysyl-[protein] + acetyl-CoA = N(6)-biotinyl-L-lysyl-[protein] + malonyl-CoA. It functions in the pathway lipid metabolism; malonyl-CoA biosynthesis; malonyl-CoA from acetyl-CoA: step 1/1. Functionally, component of the acetyl coenzyme A carboxylase (ACC) complex. Biotin carboxylase (BC) catalyzes the carboxylation of biotin on its carrier protein (BCCP) and then the CO(2) group is transferred by the transcarboxylase to acetyl-CoA to form malonyl-CoA. The sequence is that of Acetyl-coenzyme A carboxylase carboxyl transferase subunit beta from Desulforudis audaxviator (strain MP104C).